The primary structure comprises 237 residues: Phosphoribosylaminoimidazole-succinocarboxamide synthase (237 aa).

Belongs to the SAICAR synthetase family.

It catalyses the reaction 5-amino-1-(5-phospho-D-ribosyl)imidazole-4-carboxylate + L-aspartate + ATP = (2S)-2-[5-amino-1-(5-phospho-beta-D-ribosyl)imidazole-4-carboxamido]succinate + ADP + phosphate + 2 H(+). It functions in the pathway purine metabolism; IMP biosynthesis via de novo pathway; 5-amino-1-(5-phospho-D-ribosyl)imidazole-4-carboxamide from 5-amino-1-(5-phospho-D-ribosyl)imidazole-4-carboxylate: step 1/2. This is Phosphoribosylaminoimidazole-succinocarboxamide synthase from Klebsiella pneumoniae (strain 342).